A 490-amino-acid polypeptide reads, in one-letter code: NAI2-like protein (490 aa).

The first 24 residues, 1-24 (MGRKYVVLGLAVCLFLSSFNEVSC), serve as a signal peptide directing secretion. Disordered regions lie at residues 43 to 83 (EEGE…VDKF) and 155 to 206 (AATN…FNKG). A coiled-coil region spans residues 136–163 (IADERRQRLEDIERKLKAAAATNIVVED). Residues 171 to 183 (KVEETQEVVKFES) show a composition bias toward basic and acidic residues. Positions 184–199 (ESSSASSESRRQSSSS) are enriched in low complexity. The stretch at 433 to 465 (TFEKTVANLSRVIEEASQAYEEYHVVVRKWKEE) forms a coiled coil.

In Arabidopsis thaliana (Mouse-ear cress), this protein is NAI2-like protein.